The following is a 164-amino-acid chain: Transmembrane protein B169L (164 aa).

The next 2 helical transmembrane spans lie at 28 to 48 (NPFI…FAIC) and 60 to 80 (TAIY…YVLN). N88 is a glycosylation site (N-linked (GlcNAc...) asparagine; by host). The interval 114–142 (SPPSVPDELEEDRPKMIPAGSKPADFKPA) is disordered.

The protein belongs to the asfivirus B169L family.

The protein resides in the host membrane. The protein localises to the virion. The protein is Transmembrane protein B169L of Ornithodoros (relapsing fever ticks).